Here is a 273-residue protein sequence, read N- to C-terminus: Homeobox protein HMX2 (273 aa).

The segment at 1 to 154 is disordered; sequence MGSKEDVGKG…TGAAKKKTRT (154 aa). The segment covering 114 to 123 has biased composition (basic and acidic residues); it reads PDFKEEKERL. Residues 149–208 constitute a DNA-binding region (homeobox); that stretch reads KKKTRTVFSRSQVYQLESTFDMKRYLSSSERACLASSLQLTETQVKTWFQNRRNKWKRQL.

The protein belongs to the HMX homeobox family. Expressed in the developing CNS, including a specific expression in vestibular structures throughout inner ear development.

Its subcellular location is the nucleus. In terms of biological role, transcription factor involved in specification of neuronal cell types and which is required for inner ear and hypothalamus development. This chain is Homeobox protein HMX2 (Hmx2), found in Mus musculus (Mouse).